The sequence spans 1325 residues: ATP-binding cassette sub-family C member 4 (1325 aa).

6 helical membrane passes run 93–113, 136–156, 205–225, 227–247, 322–342, and 351–371; these read LILG…PLFL, GYAA…HLYF, FDQV…AIAV, VLLW…LVIL, ASFF…YVLL, and VFVA…FFPS. Residues 93-377 form the ABC transmembrane type-1 1 domain; it reads LILGIFTLIE…FFPSAIERGS (285 aa). One can recognise an ABC transporter 1 domain in the interval 410–633; the sequence is VHVQDFTAFW…GVDFGSLLKK (224 aa). Residue 445–452 coordinates ATP; sequence GPVGAGKS. A phosphothreonine mark is found at Thr646 and Thr648. Over residues 657-667 the composition is skewed to polar residues; the sequence is ASIWSQQSSRP. The disordered stretch occupies residues 657–690; the sequence is ASIWSQQSSRPSLKDGAPEGQDAENTQAVQPEES. Residues Ser664 and Ser668 each carry the phosphoserine modification. A run of 5 helical transmembrane segments spans residues 710 to 730, 761 to 781, 849 to 869, 954 to 974, and 977 to 997; these read SWFF…FYVL, LSWY…FGIA, LVVS…IPLV, AICA…AKTL, and GQVG…QWSV. The 292-residue stretch at 714–1005 folds into the ABC transmembrane type-1 2 domain; sequence IIFLVLLNMV…SVRQSAEVEN (292 aa). The region spanning 1041-1274 is the ABC transporter 2 domain; it reads IVFDNVNFTY…PESLFYKMVQ (234 aa). An ATP-binding site is contributed by 1075–1082; sequence GRTGAGKS. Positions 1322 to 1325 match the PDZ-binding motif; that stretch reads ETAL.

Interacts (via PDZ-binding motif) with SNX27 (via PDZ domain); this interaction accelerates MRP4 internalization. Mg(2+) serves as cofactor. In terms of processing, N-glycosylated; leading to substrate-selective effects on its transport activity.

It localises to the basolateral cell membrane. The protein localises to the apical cell membrane. The catalysed reaction is ATP + H2O + xenobioticSide 1 = ADP + phosphate + xenobioticSide 2.. It carries out the reaction an S-substituted glutathione(in) + ATP + H2O = an S-substituted glutathione(out) + ADP + phosphate + H(+). It catalyses the reaction 17beta-estradiol 17-O-(beta-D-glucuronate)(in) + ATP + H2O = 17beta-estradiol 17-O-(beta-D-glucuronate)(out) + ADP + phosphate + H(+). The enzyme catalyses dehydroepiandrosterone 3-sulfate(in) + ATP + H2O = dehydroepiandrosterone 3-sulfate(out) + ADP + phosphate + H(+). The catalysed reaction is leukotriene C4(in) + ATP + H2O = leukotriene C4(out) + ADP + phosphate + H(+). It carries out the reaction leukotriene B4(in) + ATP + H2O = leukotriene B4(out) + ADP + phosphate + H(+). It catalyses the reaction urate(in) + ATP + H2O = urate(out) + ADP + phosphate + H(+). The enzyme catalyses 3',5'-cyclic GMP(in) + ATP + H2O = 3',5'-cyclic GMP(out) + ADP + phosphate + H(+). The catalysed reaction is 3',5'-cyclic AMP(in) + ATP + H2O = 3',5'-cyclic AMP(out) + ADP + phosphate + H(+). It carries out the reaction prostaglandin E2(in) + ATP + H2O = prostaglandin E2(out) + ADP + phosphate + H(+). It catalyses the reaction prostaglandin E1(in) + ATP + H2O = prostaglandin E1(out) + ADP + phosphate + H(+). The enzyme catalyses glycodeoxycholate(in) + glutathione(in) + ATP + H2O = glycodeoxycholate(out) + glutathione(out) + ADP + phosphate + H(+). The catalysed reaction is cholate(in) + glutathione(in) + ATP + H2O = cholate(out) + glutathione(out) + ADP + phosphate + H(+). It carries out the reaction glycocholate(in) + glutathione(in) + ATP + H2O = glycocholate(out) + glutathione(out) + ADP + phosphate + H(+). It catalyses the reaction taurocholate(in) + glutathione(in) + ATP + H2O = taurocholate(out) + glutathione(out) + ADP + phosphate + H(+). The enzyme catalyses glycochenodeoxycholate(in) + glutathione(in) + ATP + H2O = glycochenodeoxycholate(out) + glutathione(out) + ADP + phosphate + H(+). The catalysed reaction is taurochenodeoxycholate(in) + glutathione(in) + ATP + H2O = taurochenodeoxycholate(out) + glutathione(out) + ADP + phosphate + H(+). It carries out the reaction glycoursodeoxycholate(in) + glutathione(in) + ATP + H2O = glycoursodeoxycholate(out) + glutathione(out) + ADP + phosphate + H(+). It catalyses the reaction tauroursodeoxycholate(in) + glutathione(in) + ATP + H2O = tauroursodeoxycholate(out) + glutathione(out) + ADP + phosphate + H(+). Its function is as follows. ATP-dependent transporter of the ATP-binding cassette (ABC) family that actively extrudes physiological compounds and xenobiotics from cells. Transports a range of endogenous molecules that have a key role in cellular communication and signaling, including cyclic nucleotides such as cyclic AMP (cAMP) and cyclic GMP (cGMP), bile acids, steroid conjugates, urate, and prostaglandins. Also mediates the ATP-dependent efflux of glutathione conjugates such as leukotriene C4 (LTC4) and leukotriene B4 (LTB4). The presence of GSH is necessary for the ATP-dependent transport of LTB4, whereas GSH is not required for the transport of LTC4. Mediates the cotransport of bile acids with reduced glutathione (GSH). Transports a wide range of drugs and their metabolites, including anticancer, antiviral and antibiotics molecules. Confers resistance to anticancer agents. This chain is ATP-binding cassette sub-family C member 4, found in Mus musculus (Mouse).